The following is an 868-amino-acid chain: DNA mismatch repair protein MutS (868 aa).

620–627 lines the ATP pocket; that stretch reads GPNMGGKS.

Belongs to the DNA mismatch repair MutS family.

Functionally, this protein is involved in the repair of mismatches in DNA. It is possible that it carries out the mismatch recognition step. This protein has a weak ATPase activity. This chain is DNA mismatch repair protein MutS, found in Xylella fastidiosa (strain Temecula1 / ATCC 700964).